We begin with the raw amino-acid sequence, 254 residues long: Acetyl-coenzyme A carboxylase carboxyl transferase subunit beta (254 aa).

Residues 1–254 (MWLRCPHCHQ…LLKTGSVANE (254 aa)) enclose the CoA carboxyltransferase N-terminal domain. Positions 5, 8, 23, and 26 each coordinate Zn(2+). A C4-type zinc finger spans residues 5–26 (CPHCHQLLFAKQLTQYAVCPNC).

The protein belongs to the AccD/PCCB family. As to quaternary structure, acetyl-CoA carboxylase is a heterohexamer composed of biotin carboxyl carrier protein (AccB), biotin carboxylase (AccC) and two subunits each of ACCase subunit alpha (AccA) and ACCase subunit beta (AccD). The cofactor is Zn(2+).

Its subcellular location is the cytoplasm. The enzyme catalyses N(6)-carboxybiotinyl-L-lysyl-[protein] + acetyl-CoA = N(6)-biotinyl-L-lysyl-[protein] + malonyl-CoA. It participates in lipid metabolism; malonyl-CoA biosynthesis; malonyl-CoA from acetyl-CoA: step 1/1. Functionally, component of the acetyl coenzyme A carboxylase (ACC) complex. Biotin carboxylase (BC) catalyzes the carboxylation of biotin on its carrier protein (BCCP) and then the CO(2) group is transferred by the transcarboxylase to acetyl-CoA to form malonyl-CoA. The chain is Acetyl-coenzyme A carboxylase carboxyl transferase subunit beta from Limosilactobacillus reuteri (strain DSM 20016) (Lactobacillus reuteri).